Consider the following 162-residue polypeptide: ATP synthase subunit delta, mitochondrial (162 aa).

The transit peptide at 1–25 (MSSLRLLASAARRATTHVAYTRRGY) directs the protein to the mitochondrion.

Belongs to the ATPase epsilon chain family. F-type ATPases have 2 components, CF(1) - the catalytic core - and CF(0) - the membrane proton channel. CF(1) has five subunits: alpha(3), beta(3), gamma(1), delta(1), epsilon(1). CF(0) has three main subunits: a, b and c.

It localises to the mitochondrion. It is found in the mitochondrion inner membrane. Functionally, mitochondrial membrane ATP synthase (F(1)F(0) ATP synthase or Complex V) produces ATP from ADP in the presence of a proton gradient across the membrane which is generated by electron transport complexes of the respiratory chain. F-type ATPases consist of two structural domains, F(1) - containing the extramembraneous catalytic core, and F(0) - containing the membrane proton channel, linked together by a central stalk and a peripheral stalk. During catalysis, ATP turnover in the catalytic domain of F(1) is coupled via a rotary mechanism of the central stalk subunits to proton translocation. Part of the complex F(1) domain and of the central stalk which is part of the complex rotary element. Rotation of the central stalk against the surrounding alpha(3)beta(3) subunits leads to hydrolysis of ATP in three separate catalytic sites on the beta subunits. The polypeptide is ATP synthase subunit delta, mitochondrial (atpD) (Agaricus bisporus (White button mushroom)).